The following is a 417-amino-acid chain: Serine hydroxymethyltransferase (417 aa).

Residues L121 and G125–L127 contribute to the (6S)-5,6,7,8-tetrahydrofolate site. K229 is subject to N6-(pyridoxal phosphate)lysine. S354 to F356 serves as a coordination point for (6S)-5,6,7,8-tetrahydrofolate.

This sequence belongs to the SHMT family. As to quaternary structure, homodimer. Requires pyridoxal 5'-phosphate as cofactor.

The protein localises to the cytoplasm. The catalysed reaction is (6R)-5,10-methylene-5,6,7,8-tetrahydrofolate + glycine + H2O = (6S)-5,6,7,8-tetrahydrofolate + L-serine. Its pathway is one-carbon metabolism; tetrahydrofolate interconversion. It participates in amino-acid biosynthesis; glycine biosynthesis; glycine from L-serine: step 1/1. Functionally, catalyzes the reversible interconversion of serine and glycine with tetrahydrofolate (THF) serving as the one-carbon carrier. This reaction serves as the major source of one-carbon groups required for the biosynthesis of purines, thymidylate, methionine, and other important biomolecules. Also exhibits THF-independent aldolase activity toward beta-hydroxyamino acids, producing glycine and aldehydes, via a retro-aldol mechanism. The protein is Serine hydroxymethyltransferase of Stutzerimonas stutzeri (strain A1501) (Pseudomonas stutzeri).